The primary structure comprises 266 residues: MPDILDKIMAVKRQEIAAAQKKSPLEAVRFDAESRVLTRDFEGALRTRIAAGHAAVIAEVKKASPSKGVLREDFIPADIAQSYAEGDGEISAACLSVLTDKQFFQGGVDYLKQARASCDLPVLRKDFIVDAYQVYESRAMGADAVLLIAACLDDAQMKDYEAIARGLGMAVLVEVHDAAELERALKLKTPLIGVNNRNLRNFEVSIQATIDLLPRLPADRLAVTESGIATREDVATLRAAGVHAFLVGEAFMRAKEPGEALAALFK.

It belongs to the TrpC family.

It carries out the reaction 1-(2-carboxyphenylamino)-1-deoxy-D-ribulose 5-phosphate + H(+) = (1S,2R)-1-C-(indol-3-yl)glycerol 3-phosphate + CO2 + H2O. It participates in amino-acid biosynthesis; L-tryptophan biosynthesis; L-tryptophan from chorismate: step 4/5. The chain is Indole-3-glycerol phosphate synthase from Variovorax paradoxus (strain S110).